A 586-amino-acid chain; its full sequence is Axin-like protein pry-1 (586 aa).

Residues 1–135 (METHLGWARS…FIEAFNKMSS (135 aa)) are required for interaction with apr-1. In terms of domain architecture, RGS spans 10–131 (SLEAVLSDRS…GSEEFIEAFN (122 aa)). Disordered stretches follow at residues 137 to 168 (TADQ…KSAA), 344 to 442 (MTDD…DSFA), and 478 to 501 (TSSL…HSKI). Composition is skewed to polar residues over residues 151–168 (HQNT…KSAA) and 368–388 (GEGS…QLHN). A compositionally biased stretch (low complexity) spans 421–442 (SQSMCAPSYSSASSSYSRDSFA). Positions 486–501 (RRQHRKAPTPKKHSKI) are enriched in basic residues. A DIX domain is found at 505–586 (LSNLITISYL…FEGRIAAELR (82 aa)).

Interacts (via N-terminus) with apr-1 (via C-terminus). Interacts with bar-1 (via ARM repeats), gsk-3, and mig-5. As to expression, expressed in hypodermal cells (seam cells) V5 and V6, Q neuroblasts, ventral hypodermal cells P7/8 to P11/12, body wall muscle cells and neurons in the head, the tail and the ventral nerve cord.

The protein resides in the cell membrane. The protein localises to the nucleus. Its subcellular location is the cytoplasm. It is found in the cell cortex. Functionally, works in parallel with axl-1 in negatively regulating bar-1 signaling in vulval precursor cells and Q neuroblasts. Inhibits Wnt signaling, which affects tissue specific expression of Hox genes, egl-5, lin-39 and mab-5. This in turn affects QR (postembryonic neuroblast) cell migration, vulval cell fate specification, and the development of sensory structures by the seam cell lineage. Has a role in alae V cell patterning, ray formation in the male tail and axon guidance. Does not affect B cell polarity. This is Axin-like protein pry-1 from Caenorhabditis elegans.